The chain runs to 364 residues: Mannose-1-phosphate guanyltransferase (364 aa).

This sequence belongs to the transferase hexapeptide repeat family.

The protein resides in the cytoplasm. The enzyme catalyses alpha-D-mannose 1-phosphate + GTP + H(+) = GDP-alpha-D-mannose + diphosphate. Its pathway is nucleotide-sugar biosynthesis; GDP-alpha-D-mannose biosynthesis; GDP-alpha-D-mannose from alpha-D-mannose 1-phosphate (GTP route): step 1/1. Functionally, involved in cell wall synthesis where it is required for glycosylation. Involved in cell cycle progression through cell-size checkpoint. The polypeptide is Mannose-1-phosphate guanyltransferase (MPG1) (Pichia angusta (Yeast)).